A 363-amino-acid chain; its full sequence is Type-2 angiotensin II receptor (363 aa).

At 1–45 (MKDNFSFAATSRNITSSLPFVNLNMSGTNDLIFNCSHKPSDKHLE) the chain is on the extracellular side. Residues asparagine 4, asparagine 13, asparagine 24, and asparagine 34 are each glycosylated (N-linked (GlcNAc...) asparagine). 2 disulfides stabilise this stretch: cysteine 35/cysteine 290 and cysteine 117/cysteine 195. A helical transmembrane segment spans residues 46–70 (AIPVLYYLIFVIGFAVNIIVVSLFC). Topologically, residues 71–80 (CQKGPKKVSS) are cytoplasmic. The chain crosses the membrane as a helical span at residues 81-104 (IYIFNLAVADLLLLATLPLWATYY). Positions 103 and 104 each coordinate angiotensin II. The Extracellular segment spans residues 105–114 (SYRYDWLFGP). A helical transmembrane segment spans residues 115 to 140 (VMCKVFGSFLTLNMFASIFFITCMSV). Topologically, residues 141 to 159 (DRYQSVIYPFLSQRRNPWQ) are cytoplasmic. Residues 160–181 (ASYVVPLVWCMACLSSLPTFYF) form a helical membrane-spanning segment. Residues arginine 182, tyrosine 204, and lysine 215 each contribute to the angiotensin II site. At 182 to 206 (RDVRTIEYLGVNACVMAFPPEKYAQ) the chain is on the extracellular side. The helical transmembrane segment at 207 to 232 (WSAGIALMKNVLGFIIPLIFIATCYF) threads the bilayer. The Cytoplasmic segment spans residues 233–257 (GIRKHLLKTNSYGKNRITRDQVLKM). Residues 258–281 (AAAVVLAFIICWLPFHVLTFLDAL) form a helical membrane-spanning segment. An angiotensin II-binding site is contributed by aspartate 279. Residues 282 to 294 (SWMGIINSCEVMA) lie on the Extracellular side of the membrane. The helical transmembrane segment at 295-320 (VIDLALPFAILLGFTNSCVNPFLYCF) threads the bilayer. Aspartate 297 lines the angiotensin II pocket. Residues 321–363 (VGNRFQQKLRSMFRVPITWLQGKRETMSCRKSSSLREMDTFVS) lie on the Cytoplasmic side of the membrane. The interval 324 to 333 (RFQQKLRSMF) is helix VIII. Position 354 is a phosphoserine; by PKC (serine 354).

It belongs to the G-protein coupled receptor 1 family. Interacts with MTUS1.

It is found in the cell membrane. In terms of biological role, receptor for angiotensin II, a vasoconstricting peptide. Signals primarily via a non-canonical G-protein- and beta-arrestin independent pathways. Cooperates with MTUS1 to inhibit ERK2 activation and cell proliferation. The chain is Type-2 angiotensin II receptor (AGTR2) from Meriones unguiculatus (Mongolian jird).